Reading from the N-terminus, the 1803-residue chain is 6-methylsalicylic acid synthase (1803 aa).

Residues 1–40 (MEVHGDEVLSVDSGVSTPPSTGSGFRRPLETPGTEIGNLN) are disordered. Positions 13-24 (SGVSTPPSTGSG) are enriched in low complexity. Residues 44–470 (QNEVAVVGMA…GTVSHAIIEE (427 aa)) enclose the Ketosynthase family 3 (KS3) domain. Catalysis depends on for beta-ketoacyl synthase activity residues C216, H351, and H391. The region spanning 581-894 (VWVFSGHGAQ…SIAQLHCRGA (314 aa)) is the Malonyl-CoA:ACP transacylase (MAT) domain. The For malonyltransferase activity role is filled by S667. The N-terminal hotdog fold stretch occupies residues 940 to 1058 (HTLLGQRVPV…GQWEAGGSKN (119 aa)). The PKS/mFAS DH domain maps to 940 to 1218 (HTLLGQRVPV…FSEIEGTPGS (279 aa)). The Proton acceptor; for thioesterase activity role is filled by H972. A C-terminal hotdog fold region spans residues 1073–1218 (ANNKLADNFS…FSEIEGTPGS (146 aa)). D1129 functions as the Proton donor; for thioesterase activity in the catalytic mechanism. Positions 1141–1262 (TSVGSTLFFD…KNVADLYCGS (122 aa)) are required for homotetramer formation. The Ketoreductase (KR) domain occupies 1434–1628 (STYLITGGLG…AVAVQWTSWR (195 aa)). Positions 1701–1710 (ASSADAPSAA) are enriched in low complexity. The segment at 1701–1721 (ASSADAPSAAPKETNEMPESI) is disordered. The region spanning 1726-1801 (TWLDERIRDC…HLVGWFLEKM (76 aa)) is the Carrier domain. S1761 is modified (O-(pantetheine 4'-phosphoryl)serine). Residues 1783–1803 (LTWSCPTVSHLVGWFLEKMGN) form a required for catalytic activity region.

In terms of assembly, homotetramer.

The enzyme catalyses 3 malonyl-CoA + acetyl-CoA + NADPH + 3 H(+) = 6-methylsalicylate + 3 CO2 + NADP(+) + 4 CoA + H2O. Its pathway is secondary metabolite biosynthesis. Its function is as follows. 6-methylsalicylic acid synthase; part of the gene cluster that mediates the biosynthesis of terreic acid, a quinone epoxide inhibitor of Bruton's tyrosine kinase. The first step of the pathway is the synthesis of 6-methylsalicylic acid (6-MSA) by the 6-methylsalicylic acid synthase atX. In the biosynthesis of 6-MSA, atX utilizes one acetyl-CoA and three malonyl-CoAs as its substrates and catalyzes a series of programmed reactions including Claisen condensation, reduction, aldol cyclization, and the hydrolytic cleavage that yields 6-MSA. The 6-methylsalicylate 1-monooxygenase atA then catalyzes the decarboxylative hydroxylation of 6-MSA to 3-methylcatechol. The next step is the conversion of 3-methylcatechol to 3-methyl-1,2,4-benzenetriol by cytochrome P450 monooxygenase atE, which is enhanced by cytochrome P450 monooxygenase atG. Then, the epoxidase atD catalyzes the epoxidation and hydroxyl oxidation of 3-methyl-1,2,4-benzenetriol to terremutin. Lastly, GMC oxidoreductase atC oxidizes terremutin to terreic acid. This Aspergillus terreus (strain NIH 2624 / FGSC A1156) protein is 6-methylsalicylic acid synthase.